The chain runs to 375 residues: 23S rRNA (uracil(747)-C(5))-methyltransferase RlmC (375 aa).

4 residues coordinate [4Fe-4S] cluster: Cys-3, Cys-11, Cys-14, and Cys-87. Positions 212, 241, 262, and 307 each coordinate S-adenosyl-L-methionine. Cys-334 serves as the catalytic Nucleophile.

The protein belongs to the class I-like SAM-binding methyltransferase superfamily. RNA M5U methyltransferase family. RlmC subfamily.

It catalyses the reaction uridine(747) in 23S rRNA + S-adenosyl-L-methionine = 5-methyluridine(747) in 23S rRNA + S-adenosyl-L-homocysteine + H(+). Functionally, catalyzes the formation of 5-methyl-uridine at position 747 (m5U747) in 23S rRNA. This chain is 23S rRNA (uracil(747)-C(5))-methyltransferase RlmC, found in Shigella boydii serotype 18 (strain CDC 3083-94 / BS512).